We begin with the raw amino-acid sequence, 184 residues long: Peptide deformylase (184 aa).

Residues C99 and H141 each coordinate Fe cation. Residue E142 is part of the active site. A Fe cation-binding site is contributed by H145.

The protein belongs to the polypeptide deformylase family. It depends on Fe(2+) as a cofactor.

The catalysed reaction is N-terminal N-formyl-L-methionyl-[peptide] + H2O = N-terminal L-methionyl-[peptide] + formate. Removes the formyl group from the N-terminal Met of newly synthesized proteins. Requires at least a dipeptide for an efficient rate of reaction. N-terminal L-methionine is a prerequisite for activity but the enzyme has broad specificity at other positions. This is Peptide deformylase from Chlamydia abortus (strain DSM 27085 / S26/3) (Chlamydophila abortus).